The primary structure comprises 273 residues: NAD-dependent protein deacetylase 2 (273 aa).

Residues 1 to 273 form the Deacetylase sirtuin-type domain; it reads MSNAPLANQS…RCEAALAFLL (273 aa). NAD(+) contacts are provided by residues 26 to 46 and 104 to 107; these read GAGCSTNSGIPDYRDSHGNWK and QNVD. The Proton acceptor role is filled by histidine 122. Positions 130, 133, 181, and 184 each coordinate Zn(2+). NAD(+)-binding positions include 221 to 223, 247 to 249, and cysteine 265; these read GSS and NLG.

The protein belongs to the sirtuin family. Class II subfamily. The cofactor is Zn(2+).

It is found in the cytoplasm. It catalyses the reaction N(6)-acetyl-L-lysyl-[protein] + NAD(+) + H2O = 2''-O-acetyl-ADP-D-ribose + nicotinamide + L-lysyl-[protein]. Functionally, NAD-dependent protein deacetylase which modulates the activities of several enzymes which are inactive in their acetylated form. This is NAD-dependent protein deacetylase 2 from Bradyrhizobium diazoefficiens (strain JCM 10833 / BCRC 13528 / IAM 13628 / NBRC 14792 / USDA 110).